Consider the following 122-residue polypeptide: Ribonuclease P protein subunit p14 (122 aa).

The protein belongs to the eukaryotic/archaeal RNase P protein component 2 family. In terms of assembly, RNase P consists of a catalytic RNA moiety and about 10 protein subunits; POP1, POP4, POP5, POP7, RPP14, RPP21, RPP25, RPP30, RPP38 and RPP40. Within the RNase P complex, POP1, POP7 and RPP25 form the 'finger' subcomplex, POP5, RPP14, RPP40 and homodimeric RPP30 form the 'palm' subcomplex, and RPP21, POP4 and RPP38 form the 'wrist' subcomplex. All subunits of the RNase P complex interact with the catalytic RNA.

It is found in the nucleus. The protein localises to the nucleolus. Functionally, component of ribonuclease P, a ribonucleoprotein complex that generates mature tRNA molecules by cleaving their 5'-ends. The sequence is that of Ribonuclease P protein subunit p14 (Rpp14) from Mus musculus (Mouse).